Reading from the N-terminus, the 909-residue chain is Protein translocase subunit SecA (909 aa).

Residues glutamine 87 and 105 to 109 each bind ATP; that span reads GEGKT. A disordered region spans residues 246-265; sequence LEQQEKEDEEGKNGDGDYTI. Residues 254 to 265 are compositionally biased toward basic and acidic residues; that stretch reads EEGKNGDGDYTI. Residue aspartate 512 participates in ATP binding. Over residues 834–858 the composition is skewed to basic and acidic residues; it reads ESDVEAVEEQRRQADEQPKQYEHET. The interval 834 to 899 is disordered; sequence ESDVEAVEEQ…NDPCPCGSGL (66 aa). The segment covering 859–875 has biased composition (low complexity); that stretch reads ASATQAPEQAPEAAPAA. Residues cysteine 893, cysteine 895, cysteine 904, and histidine 905 each contribute to the Zn(2+) site.

It belongs to the SecA family. As to quaternary structure, monomer and homodimer. Part of the essential Sec protein translocation apparatus which comprises SecA, SecYEG and auxiliary proteins SecDF-YajC and YidC. Zn(2+) is required as a cofactor.

The protein localises to the cell inner membrane. Its subcellular location is the cytoplasm. It carries out the reaction ATP + H2O + cellular proteinSide 1 = ADP + phosphate + cellular proteinSide 2.. Its function is as follows. Part of the Sec protein translocase complex. Interacts with the SecYEG preprotein conducting channel. Has a central role in coupling the hydrolysis of ATP to the transfer of proteins into and across the cell membrane, serving both as a receptor for the preprotein-SecB complex and as an ATP-driven molecular motor driving the stepwise translocation of polypeptide chains across the membrane. This is Protein translocase subunit SecA from Pseudoalteromonas atlantica (strain T6c / ATCC BAA-1087).